An 807-amino-acid polypeptide reads, in one-letter code: Probable dimethyl sulfoxide reductase chain YnfF (807 aa).

Positions 1–45 (MKIHTTEALMKAEISRRSLMKTSALGSLALASSAFTLPFSQMVRA) form a signal peptide, tat-type signal. Residues 52–113 (EKAVWSSCTV…SIRRRMNHPD (62 aa)) enclose the 4Fe-4S Mo/W bis-MGD-type domain. [4Fe-4S] cluster-binding residues include Cys59, Cys63, Cys67, and Cys99. Ser195 contributes to the Mo-bis(molybdopterin guanine dinucleotide) binding site.

This sequence belongs to the prokaryotic molybdopterin-containing oxidoreductase family. In terms of assembly, the complex consists of three subunits: YnfF, the reductase; YnfG, an electron transfer protein, and YnfH, a membrane anchor protein. [4Fe-4S] cluster serves as cofactor. It depends on Mo-bis(molybdopterin guanine dinucleotide) as a cofactor. In terms of processing, exported by the Tat system. The position of the signal peptide cleavage has not been experimentally proven. Can also be exported by the Sec system.

It localises to the cell membrane. Functionally, terminal reductase during anaerobic growth on various sulfoxide and N-oxide compounds. The sequence is that of Probable dimethyl sulfoxide reductase chain YnfF (ynfF) from Escherichia coli (strain K12).